Here is a 120-residue protein sequence, read N- to C-terminus: Testis-expressed protein 48 (120 aa).

Residues 29–45 (KVPSQTQEHKPSTQNLL) show a composition bias toward polar residues. Residues 29–86 (KVPSQTQEHKPSTQNLLLQKDELDRQNPKRINAVSHLPSRTPLIQTKKSTSSSSSEFE) are disordered. The span at 74–83 (TKKSTSSSSS) shows a compositional bias: low complexity.

This Homo sapiens (Human) protein is Testis-expressed protein 48.